The following is a 542-amino-acid chain: MFS thioclapurine efflux transporter tcpA (542 aa).

Over residues 1–10 (MATVGTEEKN) the composition is skewed to basic and acidic residues. Residues 1–24 (MATVGTEEKNPIGSASNTAEPNVT) form a disordered region. A compositionally biased stretch (polar residues) spans 13–24 (GSASNTAEPNVT). Asparagine 22 carries N-linked (GlcNAc...) asparagine glycosylation. 3 helical membrane-spanning segments follow: residues 32 to 52 (SGFK…LCGL), 75 to 97 (GWYT…KLYT), and 103 to 123 (MILL…AAAP). An N-linked (GlcNAc...) asparagine glycan is attached at asparagine 124. 6 helical membrane passes run 133-153 (AIAG…LVHA), 161-181 (ALLG…PFIG), 193-213 (CFII…FFVF), 234-254 (IPEI…LQWG), 265-285 (IIAL…LQVL), and 307-327 (IFAL…PIYF). A glycan (N-linked (GlcNAc...) asparagine) is linked at asparagine 332. Residues 339-359 (GVNVMPLILGFLVMSIISGVI) traverse the membrane as a helical segment. N-linked (GlcNAc...) asparagine glycosylation is present at asparagine 361. A run of 4 helical transmembrane segments spans residues 370–390 (MFLC…FDVG), 396–416 (WIGY…QPIV), 427–447 (VPFG…IFVA), and 500–520 (VLGQ…LGSL).

The protein belongs to the major facilitator superfamily.

It localises to the cell membrane. Functionally, MFS efflux transporter probably involved in thioclapurine export. This chain is MFS thioclapurine efflux transporter tcpA, found in Claviceps purpurea (strain 20.1) (Ergot fungus).